A 124-amino-acid chain; its full sequence is Sporulation initiation phosphotransferase F (124 aa).

The Response regulatory domain maps to 5–119 (KILIVDDQYG…EIRDAVKKYL (115 aa)). Mg(2+)-binding residues include D10, D11, D54, and K56. The residue at position 54 (D54) is a 4-aspartylphosphate.

It depends on Mg(2+) as a cofactor. In terms of processing, phosphorylated by KinA and KinB. Dephosphorylated by RapA and RapB.

Its subcellular location is the cytoplasm. Its function is as follows. Key element in the phosphorelay regulating sporulation initiation. Phosphorylation of spo0B during sporulation initiation. The protein is Sporulation initiation phosphotransferase F (spo0F) of Bacillus subtilis (strain 168).